We begin with the raw amino-acid sequence, 287 residues long: Glucose import system permease protein GlcU (287 aa).

A run of 7 helical transmembrane segments spans residues 14 to 34, 76 to 96, 113 to 133, 149 to 169, 194 to 214, 218 to 238, and 250 to 270; these read HYLA…AMLI, IIVI…AYFF, VLFS…LLPL, IIFA…SMFI, IVFP…IIQA, FFIP…IAVL, and DTFA…VFLG. The region spanning 71–269 is the ABC transmembrane type-1 domain; it reads LINSLIIVIP…IIPLAIFVFL (199 aa).

The protein belongs to the binding-protein-dependent transport system permease family. As to quaternary structure, the complex is composed of two ATP-binding proteins (GlcV), two transmembrane proteins (GlcT and GlcU) and a solute-binding protein (GlcS).

The protein resides in the cell membrane. Functionally, part of the ABC transporter complex GlcSTUV involved in glucose uptake. Responsible for the translocation of the substrate across the membrane. The polypeptide is Glucose import system permease protein GlcU (Saccharolobus solfataricus (strain ATCC 35092 / DSM 1617 / JCM 11322 / P2) (Sulfolobus solfataricus)).